A 725-amino-acid polypeptide reads, in one-letter code: Fatty acid oxidation complex subunit alpha (725 aa).

Residues 1–189 (MLYKGDTLYL…KIGLVDGVVK (189 aa)) are enoyl-CoA hydratase/isomerase. Substrate is bound at residue Asp296. A 3-hydroxyacyl-CoA dehydrogenase region spans residues 311-725 (ETPKQAAVLG…RLNQPVRLVL (415 aa)). Residues Met324, Asp343, 400–402 (VVE), Lys407, and Ser429 contribute to the NAD(+) site. His450 serves as the catalytic For 3-hydroxyacyl-CoA dehydrogenase activity. Asn453 contributes to the NAD(+) binding site. Residues Asn500 and Tyr660 each coordinate substrate.

It in the N-terminal section; belongs to the enoyl-CoA hydratase/isomerase family. In the C-terminal section; belongs to the 3-hydroxyacyl-CoA dehydrogenase family. As to quaternary structure, heterotetramer of two alpha chains (FadB) and two beta chains (FadA).

It carries out the reaction a (3S)-3-hydroxyacyl-CoA + NAD(+) = a 3-oxoacyl-CoA + NADH + H(+). The catalysed reaction is a (3S)-3-hydroxyacyl-CoA = a (2E)-enoyl-CoA + H2O. The enzyme catalyses a 4-saturated-(3S)-3-hydroxyacyl-CoA = a (3E)-enoyl-CoA + H2O. It catalyses the reaction (3S)-3-hydroxybutanoyl-CoA = (3R)-3-hydroxybutanoyl-CoA. It carries out the reaction a (3Z)-enoyl-CoA = a 4-saturated (2E)-enoyl-CoA. The catalysed reaction is a (3E)-enoyl-CoA = a 4-saturated (2E)-enoyl-CoA. The protein operates within lipid metabolism; fatty acid beta-oxidation. Involved in the aerobic and anaerobic degradation of long-chain fatty acids via beta-oxidation cycle. Catalyzes the formation of 3-oxoacyl-CoA from enoyl-CoA via L-3-hydroxyacyl-CoA. It can also use D-3-hydroxyacyl-CoA and cis-3-enoyl-CoA as substrate. The sequence is that of Fatty acid oxidation complex subunit alpha from Salmonella paratyphi A (strain ATCC 9150 / SARB42).